The primary structure comprises 401 residues: Argininosuccinate synthase (401 aa).

9–17 (AYSGGLDTS) is an ATP binding site. Position 88 (Y88) interacts with L-citrulline. G118 provides a ligand contact to ATP. Positions 120, 124, and 125 each coordinate L-aspartate. Residue N124 participates in L-citrulline binding. 5 residues coordinate L-citrulline: R128, S176, S185, E261, and Y273.

This sequence belongs to the argininosuccinate synthase family. Type 1 subfamily. As to quaternary structure, homotetramer.

Its subcellular location is the cytoplasm. The catalysed reaction is L-citrulline + L-aspartate + ATP = 2-(N(omega)-L-arginino)succinate + AMP + diphosphate + H(+). It participates in amino-acid biosynthesis; L-arginine biosynthesis; L-arginine from L-ornithine and carbamoyl phosphate: step 2/3. This is Argininosuccinate synthase from Symbiobacterium thermophilum (strain DSM 24528 / JCM 14929 / IAM 14863 / T).